A 24-amino-acid chain; its full sequence is Unknown protein 3 (24 aa).

This Pseudotsuga menziesii (Douglas-fir) protein is Unknown protein 3.